The following is a 750-amino-acid chain: uncharacterized protein (750 aa).

The next 5 helical transmembrane spans lie at 2-22, 33-53, 79-99, 116-136, and 143-163; these read FVLL…TNVI, SLIL…DIFI, LLVL…VVSL, LSIF…TIML, and IQSL…SPIA. 2 disordered regions span residues 385-461 and 571-651; these read DNKG…KKKE and NKEF…PLTA. Residues 398–411 show a composition bias toward basic and acidic residues; it reads ENTKGDDNSSEKTD. The segment covering 412-424 has biased composition (polar residues); it reads TVSVSTKLKTTAD. A compositionally biased stretch (low complexity) spans 425–436; sequence QSESTQMSSEST. Residues 437 to 451 are compositionally biased toward polar residues; sequence ATGISSDPQSQGKMN. The segment covering 452 to 461 has biased composition (basic and acidic residues); that stretch reads NKSEEQKKKE. A compositionally biased stretch (polar residues) spans 618-629; it reads DSKGNTATNSDT. Residues 724–744 form a helical membrane-spanning segment; it reads ATIVITLFLTVVLLAIAFFFF.

This sequence to M.pneumoniae MPN_335.

Its subcellular location is the cell membrane. This is an uncharacterized protein from Mycoplasma pneumoniae (strain ATCC 29342 / M129 / Subtype 1) (Mycoplasmoides pneumoniae).